The primary structure comprises 185 residues: MVSLRLQKRLAASVLKCGQKRLWLDPNESSEISMANSRASIRKLIKDGLVMKRSTVIHSRSRARAFLEAKRKGRHTGSGKRKGTRNARMPTKVLWMRRQRVLRRLLRKYRAAKKIDKHQYHEFYLGSKGNLYKNKTVLIEAIHVSKADKIKSDKLTSQQEARRAKNTASRAKRNEKAQIVAKVDV.

A disordered region spans residues Ser152–Val185.

Belongs to the eukaryotic ribosomal protein eL19 family.

This chain is Large ribosomal subunit protein eL19 (RPL19), found in Tetrahymena thermophila (strain SB210).